Consider the following 150-residue polypeptide: Cilia- and flagella-associated protein 68 (150 aa).

Mn stretches follow at residues 99-110 (TTYDTSYNNKMP) and 140-150 (KSTYMNSYSKP).

The protein belongs to the CFAP68 family. In terms of assembly, microtubule inner protein component of sperm flagellar doublet microtubules.

It localises to the cytoplasm. The protein localises to the cytoskeleton. The protein resides in the cilium axoneme. It is found in the flagellum axoneme. Its subcellular location is the nucleus. It localises to the cell projection. The protein localises to the cilium. In terms of biological role, microtubule inner protein (MIP) part of the dynein-decorated doublet microtubules (DMTs) in cilia axoneme, which is required for motile cilia beating. In Homo sapiens (Human), this protein is Cilia- and flagella-associated protein 68.